The sequence spans 138 residues: Large ribosomal subunit protein uL16 (138 aa).

Belongs to the universal ribosomal protein uL16 family. Part of the 50S ribosomal subunit.

In terms of biological role, binds 23S rRNA and is also seen to make contacts with the A and possibly P site tRNAs. This Gluconacetobacter diazotrophicus (strain ATCC 49037 / DSM 5601 / CCUG 37298 / CIP 103539 / LMG 7603 / PAl5) protein is Large ribosomal subunit protein uL16.